The chain runs to 148 residues: MGLEKSLILLPLLVLVFGWVQSSLGKETSAQKFERHDMDSTGSSSSATYCNQMMKRRNMTQGYCKPVNTFVHEPQTAVHAVCSQKNVTCKNGNSNCYKSHSALHITDCRLKGNSKYPNCDYQTNQLQKHIIIACEGNPFVPVHFDASV.

Residues Met1 to Gly25 form the signal peptide. Substrate contacts are provided by Lys32 and Arg35. The Proton acceptor role is filled by His36. 4 disulfides stabilise this stretch: Cys50–Cys108, Cys64–Cys119, Cys82–Cys134, and Cys89–Cys96. An N-linked (GlcNAc...) asparagine glycan is attached at Asn58. Substrate is bound at residue Lys65 to Thr69. Asn86 carries N-linked (GlcNAc...) asparagine glycosylation. Substrate contacts are provided by Lys90 and Arg109. His143 functions as the Proton donor in the catalytic mechanism.

This sequence belongs to the pancreatic ribonuclease family. In terms of assembly, monomer. Interacts with and forms tight 1:1 complexes with RNH1. Dimerization of two such complexes may occur. Interaction with RNH1 inhibits this protein. Pancreas.

It is found in the secreted. It carries out the reaction an [RNA] containing cytidine + H2O = an [RNA]-3'-cytidine-3'-phosphate + a 5'-hydroxy-ribonucleotide-3'-[RNA].. The catalysed reaction is an [RNA] containing uridine + H2O = an [RNA]-3'-uridine-3'-phosphate + a 5'-hydroxy-ribonucleotide-3'-[RNA].. In terms of biological role, endonuclease that catalyzes the cleavage of RNA on the 3' side of pyrimidine nucleotides. Acts on single-stranded and double-stranded RNA. The chain is Ribonuclease pancreatic (RNASE1) from Chionomys nivalis (European snow vole).